We begin with the raw amino-acid sequence, 351 residues long: Nicotinate-nucleotide--dimethylbenzimidazole phosphoribosyltransferase (351 aa).

The active-site Proton acceptor is Glu317.

It belongs to the CobT family.

It carries out the reaction 5,6-dimethylbenzimidazole + nicotinate beta-D-ribonucleotide = alpha-ribazole 5'-phosphate + nicotinate + H(+). It participates in nucleoside biosynthesis; alpha-ribazole biosynthesis; alpha-ribazole from 5,6-dimethylbenzimidazole: step 1/2. Its function is as follows. Catalyzes the synthesis of alpha-ribazole-5'-phosphate from nicotinate mononucleotide (NAMN) and 5,6-dimethylbenzimidazole (DMB). This is Nicotinate-nucleotide--dimethylbenzimidazole phosphoribosyltransferase from Pseudomonas fluorescens (strain ATCC BAA-477 / NRRL B-23932 / Pf-5).